The primary structure comprises 617 residues: RNA polymerase sigma factor RpoD (617 aa).

Residues 170–220 (PDDGSLPAEEVEPVNLKDDSADSKEKDDEEEESDDSSDSDDEGDGGPDPEE) form a disordered region. Residues 184-195 (NLKDDSADSKEK) are compositionally biased toward basic and acidic residues. Residues 196 to 218 (DDEEEESDDSSDSDDEGDGGPDP) are compositionally biased toward acidic residues. The tract at residues 383–453 (MVEANLRLVI…TRSIADQART (71 aa)) is sigma-70 factor domain-2. The short motif at 407–410 (DLIQ) is the Interaction with polymerase core subunit RpoC element. Residues 462–538 (ETINKLNRIS…DSTMQSPIEM (77 aa)) are sigma-70 factor domain-3. Positions 551 to 604 (VLAGLTAREAKVLRMRFGIDMNTDHTLEEVGKQFDVTRERIRQIEAKALRKLRH) are sigma-70 factor domain-4. A DNA-binding region (H-T-H motif) is located at residues 577–596 (LEEVGKQFDVTRERIRQIEA).

This sequence belongs to the sigma-70 factor family. RpoD/SigA subfamily. Interacts transiently with the RNA polymerase catalytic core.

The protein localises to the cytoplasm. In terms of biological role, sigma factors are initiation factors that promote the attachment of RNA polymerase to specific initiation sites and are then released. This sigma factor is the primary sigma factor during exponential growth. The polypeptide is RNA polymerase sigma factor RpoD (Pseudomonas aeruginosa (strain ATCC 15692 / DSM 22644 / CIP 104116 / JCM 14847 / LMG 12228 / 1C / PRS 101 / PAO1)).